Reading from the N-terminus, the 319-residue chain is Taste receptor type 2 member 30 (319 aa).

M1 is a topological domain (extracellular). A helical transmembrane segment spans residues 2–22 (ITFLPIIFSILIVVIFVIGNF). Residues 23–46 (ANGFIALVNSIEWVKRQKISFADQ) are Cytoplasmic-facing. A helical membrane pass occupies residues 47–67 (ILIALAVSRVGLLWALLLHWY). At 68–86 (ATELNLAFYSVEVRITAYN) the chain is on the extracellular side. The chain crosses the membrane as a helical span at residues 87 to 107 (VWAVTNHFSNWLATSLSMFYL). The Cytoplasmic portion of the chain corresponds to 108 to 126 (LKIANFSNLIFLRIKRRVK). The chain crosses the membrane as a helical span at residues 127 to 147 (SVILVILLGPLLFLVCHLFVI). At 148–178 (NMNEIVWTKEYEGNLTWKIKLRNAVFLSNMT) the chain is on the extracellular side. 2 N-linked (GlcNAc...) asparagine glycosylation sites follow: N161 and N176. The helical transmembrane segment at 179-199 (LTMLANFVPLTLTLISFLLLI) threads the bilayer. Residues 200–229 (CSLCKHLKKMQLHGKGSQDPSTKVHIKALQ) are Cytoplasmic-facing. Residues 230-250 (TVTCFLLLCAIYFLSMIISVY) form a helical membrane-spanning segment. Residues 251–259 (NFGRLEKKP) lie on the Extracellular side of the membrane. The helical transmembrane segment at 260–280 (VFMFCQAITFSYPSTHAFILI) threads the bilayer. Over 281 to 319 (WGNKKLKQIFLSVLWHVRYWVKDRSLRLHRFTRAALCKG) the chain is Cytoplasmic.

The protein belongs to the G-protein coupled receptor T2R family.

Its subcellular location is the membrane. Receptor that may play a role in the perception of bitterness and is gustducin-linked. May play a role in sensing the chemical composition of the gastrointestinal content. The activity of this receptor may stimulate alpha gustducin, mediate PLC-beta-2 activation and lead to the gating of TRPM5. The chain is Taste receptor type 2 member 30 (TAS2R30) from Pongo pygmaeus (Bornean orangutan).